The primary structure comprises 113 residues: MDSRQAAALLVLLLLIDGGCAEGPGGQQEDQLSAEEDSEPLPPQDAQTSGSLLHYLLQAMERPGRSQAFLFQPQRFGRNTQGSWRNEWLSPRAGEGLNSQFWSLAAPQRFGKK.

Positions 1–20 (MDSRQAAALLVLLLLIDGGC) are cleaved as a signal peptide. Residues 21 to 65 (AEGPGGQQEDQLSAEEDSEPLPPQDAQTSGSLLHYLLQAMERPGR) constitute a propeptide that is removed on maturation. Residues 22–48 (EGPGGQQEDQLSAEEDSEPLPPQDAQT) form a disordered region. The residue at position 76 (Phe-76) is a Phenylalanine amide. Residues 79–92 (NTQGSWRNEWLSPR) constitute a propeptide that is removed on maturation. Phe-110 carries the phenylalanine amide modification.

Belongs to the FARP (FMRFamide related peptide) family.

It localises to the secreted. Morphine modulating peptides. Have wide-ranging physiologic effects, including the modulation of morphine-induced analgesia, elevation of arterial blood pressure, and increased somatostatin secretion from the pancreas. Neuropeptide FF potentiates and sensitizes ASIC1 and ASIC3 channels. This Homo sapiens (Human) protein is Pro-FMRFamide-related neuropeptide FF.